The primary structure comprises 495 residues: SH2 domain-containing adapter protein E (495 aa).

Disordered stretches follow at residues 51–190, 203–233, and 256–327; these read TVSE…DKGK, DYAD…EPYD, and LLDS…EYEQ. Phosphoserine is present on serine 107. A compositionally biased stretch (polar residues) spans 135 to 144; it reads TKSSGCSTYI. A compositionally biased stretch (basic and acidic residues) spans 148 to 157; that stretch reads IKVDTQEKNG. The span at 162-181 shows a compositional bias: low complexity; that stretch reads PSSSSSSSSSSSSASSSPSS. Composition is skewed to basic and acidic residues over residues 208-224 and 301-327; these read YDAK…RVGE and PRAE…EYEQ. The SH2 domain maps to 395 to 490; that stretch reads WYHGAISRAE…AEHMTLLYPV (96 aa).

In Homo sapiens (Human), this protein is SH2 domain-containing adapter protein E (SHE).